A 78-amino-acid polypeptide reads, in one-letter code: Conotoxin ArMKLT2-0313 (78 aa).

A signal peptide spans Met-1–Ala-22. A propeptide spanning residues Asp-23 to Arg-47 is cleaved from the precursor. Gln-48 bears the Pyrrolidone carboxylic acid mark. 3 disulfides stabilise this stretch: Cys-49–Cys-62, Cys-56–Cys-67, and Cys-61–Cys-75.

The protein belongs to the conotoxin O1 superfamily. As to expression, expressed by the venom duct.

The protein localises to the secreted. This Conus arenatus (Sand-dusted cone) protein is Conotoxin ArMKLT2-0313.